Reading from the N-terminus, the 1065-residue chain is Putative guanine nucleotide-exchange factor SED4 (1065 aa).

Residues 1–346 (MSGNSANYDV…SSSILRNIWK (346 aa)) are Cytoplasmic-facing. Ser-65 carries the phosphoserine modification. WD repeat units lie at residues 259–298 (FDLN…LVQL) and 302–341 (VHES…SSIL). A helical; Signal-anchor for type II membrane protein transmembrane segment spans residues 347-365 (FFLNFVLLVVLAGAIQLGY). The Lumenal portion of the chain corresponds to 366-1065 (KHNVHGFIYK…VNYAGLHDEL (700 aa)). Residue Asn-388 is glycosylated (N-linked (GlcNAc...) asparagine). Disordered stretches follow at residues 458–477 (TSAD…SSSF), 482–520 (VTNE…SESI), and 551–625 (QSES…SFLD). Residues 465–476 (SASSSSSSSSSS) are compositionally biased toward low complexity. Positions 482–495 (VTNEPIVSSPTSEI) are enriched in polar residues. Low complexity predominate over residues 568–621 (STESPSLSHMPSSSSSSLSLSSSLTTSPTTALSTSTATAVTTTQTNPTNDAANT). Asn-620 carries N-linked (GlcNAc...) asparagine glycosylation. 4 consecutive repeat copies span residues 824–833 (IDNSEYTSVL), 834–843 (ADNLEPTSVL), 844–853 (ADNSEPTSVL), and 854–863 (ADSSEPTSVF). The segment at 824–863 (IDNSEYTSVLADNLEPTSVLADNSEPTSVLADSSEPTSVF) is 4 X 10 AA tandem repeats. N-linked (GlcNAc...) asparagine glycosylation is present at Asn-1039. The Prevents secretion from ER signature appears at 1062 to 1065 (HDEL).

The protein belongs to the WD repeat SEC12 family.

It localises to the endoplasmic reticulum membrane. The protein resides in the golgi apparatus membrane. Putative guanine nucleotide-exchange factor (GEF) involved in the formation or budding of transport vesicles from the ER. Positive regulator of SAR1 probably through inhibition of the GTPase activation by SEC23. The polypeptide is Putative guanine nucleotide-exchange factor SED4 (SED4) (Saccharomyces cerevisiae (strain ATCC 204508 / S288c) (Baker's yeast)).